The sequence spans 266 residues: Non-structural maintenance of chromosomes element 1 homolog (266 aa).

An interaction with NSMCE3 region spans residues 1–102 (MQGSTRRAGA…SVSKMATDFA (102 aa)). The RING-type; atypical zinc-finger motif lies at 191 to 232 (CNICHSLLIQGQSCETCGIRMHLPCVAKYFQSTAEPRCPHCN). The tract at residues 246–266 (EKEREAGISKSSRKSLRTRQH) is disordered. The segment covering 256 to 266 (SSRKSLRTRQH) has biased composition (basic residues).

It belongs to the NSE1 family. As to quaternary structure, component of the SMC5-SMC6 complex which consists at least of SMC5, SMC6, NSMCE2, NSMCE1, NSMCE4A or EID3 and NSMCE3. NSMCE1, NSMCE4A or EID3 and NSMCE3 probably form a subcomplex that bridges the head domains of the SMC5-SMC6 heterodimer. Interacts with NSMCE3. Ubiquitinated.

The protein localises to the nucleus. It localises to the chromosome. The protein resides in the telomere. The enzyme catalyses S-ubiquitinyl-[E2 ubiquitin-conjugating enzyme]-L-cysteine + [acceptor protein]-L-lysine = [E2 ubiquitin-conjugating enzyme]-L-cysteine + N(6)-ubiquitinyl-[acceptor protein]-L-lysine.. In terms of biological role, RING-type zinc finger-containing E3 ubiquitin ligase that assembles with melanoma antigen protein (MAGE) to catalyze the direct transfer of ubiquitin from E2 ubiquitin-conjugating enzyme to a specific substrate. Within MAGE-RING ubiquitin ligase complex, MAGE stimulates and specifies ubiquitin ligase activity likely through recruitment and/or stabilization of the E2 ubiquitin-conjugating enzyme at the E3:substrate complex. Involved in maintenance of genome integrity, DNA damage response and DNA repair. NSMCE3/MAGEG1 and NSMCE1 ubiquitin ligase are components of SMC5-SMC6 complex and may positively regulate homologous recombination-mediated DNA repair. In Rattus norvegicus (Rat), this protein is Non-structural maintenance of chromosomes element 1 homolog (Nsmce1).